A 375-amino-acid polypeptide reads, in one-letter code: Dehydrodolichyl diphosphate synthase complex subunit NUS1 (375 aa).

Positions 1–28 (MPTMIKKDDKAMEPPNEKPHRKIERDDV) are enriched in basic and acidic residues. Positions 1-48 (MPTMIKKDDKAMEPPNEKPHRKIERDDVPESSNHIPPPESGVLKGGKV) are disordered. Residues 97–119 (YLFYKFLLVLLYICFGLFRYGQY) traverse the membrane as a helical segment.

Belongs to the UPP synthase family. Forms an active dehydrodolichyl diphosphate synthase complex with either SRT1 or RER2. The cofactor is Mg(2+).

The protein resides in the endoplasmic reticulum membrane. It is found in the lipid droplet. Its subcellular location is the nucleus membrane. The catalysed reaction is n isopentenyl diphosphate + (2E,6E)-farnesyl diphosphate = a di-trans,poly-cis-polyprenyl diphosphate + n diphosphate. It participates in protein modification; protein glycosylation. In terms of biological role, with SRT1 or RER2, forms the dehydrodolichyl diphosphate synthase (DDS) complex, an essential component of the dolichol monophosphate (Dol-P) biosynthetic machinery. Adds multiple copies of isopentenyl pyrophosphate (IPP) to farnesyl pyrophosphate (FPP) to produce dehydrodolichyl diphosphate (Dedol-PP), a precursor of dolichol which is utilized as a sugar carrier in protein glycosylation in the endoplasmic reticulum (ER). The polypeptide is Dehydrodolichyl diphosphate synthase complex subunit NUS1 (NUS1) (Saccharomyces cerevisiae (strain ATCC 204508 / S288c) (Baker's yeast)).